Reading from the N-terminus, the 73-residue chain is Large ribosomal subunit protein bL31 (73 aa).

The protein belongs to the bacterial ribosomal protein bL31 family. Type A subfamily. As to quaternary structure, part of the 50S ribosomal subunit.

Binds the 23S rRNA. The polypeptide is Large ribosomal subunit protein bL31 (Mesorhizobium japonicum (strain LMG 29417 / CECT 9101 / MAFF 303099) (Mesorhizobium loti (strain MAFF 303099))).